A 461-amino-acid polypeptide reads, in one-letter code: Armadillo repeat-containing X-linked protein 1 (461 aa).

The Mitochondrial intermembrane segment spans residues 1-6 (MGRTRE). Mitochondrion outer membrane (MOM)-targeting sequence stretches follow at residues 1 to 6 (MGRTRE) and 26 to 36 (RLTWGKDENEK). A helical; Signal-anchor membrane pass occupies residues 7–29 (AGCVAAGMVIGAGACYCVYRLTW). The Cytoplasmic segment spans residues 30 to 461 (GKDENEKLWD…VKVLKVLTKL (432 aa)). 2 disordered regions span residues 34–110 (NEKL…HSEG) and 148–192 (SSLP…PATA). Acidic residues predominate over residues 38–51 (WDDEDEEEEEEEES). Residues 96 to 110 (PDVKKEVYPESHSEG) are compositionally biased toward basic and acidic residues. Positions 167–185 (SRARNRTSGKVKRKNRSKS) are enriched in basic residues. ARM repeat units lie at residues 203 to 243 (PYKI…NNAA), 245 to 284 (SFNQNAIRELGGVPIIAKLIKTRDPIIREKTYNALNNLSV), 366 to 406 (PAMT…NIND), and 423 to 461 (SSLFFLFKESGVCVKKIKALASHKDLVVKVKVLKVLTKL).

This sequence belongs to the eutherian X-chromosome-specific Armcx family. Interacts with MIRO1.

The protein localises to the mitochondrion. It is found in the mitochondrion outer membrane. In terms of biological role, regulates mitochondrial transport during axon regeneration. Increases the proportion of motile mitochondria by recruiting stationary mitochondria into the motile pool. Enhances mitochondria movement and neurite growth in both adult axons and embryonic neurons. Promotes neuronal survival and axon regeneration after nerve injury. May link mitochondria to the Trak1-kinesin motor complex via its interaction with MIRO1. In Rattus norvegicus (Rat), this protein is Armadillo repeat-containing X-linked protein 1 (Armcx1).